The primary structure comprises 362 residues: P2Y purinoceptor 1 (362 aa).

Topologically, residues 1–40 are extracellular; it reads MTEALISAALNGTQPELLAGGWAAGNASTKCSLTKTGFQF. N-linked (GlcNAc...) asparagine glycosylation is found at N11 and N26. Disulfide bonds link C31/C285 and C113/C191. K35 contributes to the ADP binding site. Residues 41 to 63 form a helical membrane-spanning segment; that stretch reads YYLPTVYILVFITGFLGNSVAIW. Residues 64–76 are Cytoplasmic-facing; it reads MFVFHMRPWSGIS. A helical membrane pass occupies residues 77–98; sequence VYMFNLALADFLYVLTLPALIF. Residues 99–114 lie on the Extracellular side of the membrane; that stretch reads YYFNKTDWIFGDVMCK. N102 is a glycosylation site (N-linked (GlcNAc...) asparagine). Residues 115–136 form a helical membrane-spanning segment; the sequence is LQRFIFHVNLYGSILFLTCISV. The Cytoplasmic segment spans residues 137 to 155; it reads HRYTGVVHPLKSLGRLKKK. Residues 156–177 traverse the membrane as a helical segment; that stretch reads NAVYVSSLVWALVVAVIAPILF. At 178 to 203 the chain is on the extracellular side; the sequence is YSGTGVRRNKTITCYDTTADEYLRSY. N-linked (GlcNAc...) asparagine glycosylation is present at N186. Residue 192-194 participates in ADP binding; that stretch reads YDT. The chain crosses the membrane as a helical span at residues 204-226; that stretch reads FVYSMCTTVFMFCIPFIVILGCY. Over 227-249 the chain is Cytoplasmic; it reads GLIVKALIYKDLDNSPLRRKSIY. Residues 250–273 traverse the membrane as a helical segment; it reads LVIIVLTVFAVSYLPFHVMKTLNL. ADP contacts are provided by residues 272–276, 292–295, and R299; these read NLRAR and YATY. Over 274–292 the chain is Extracellular; it reads RARLDFQTPQMCAFNDKVY. The helical transmembrane segment at 293–314 threads the bilayer; the sequence is ATYQVTRGLASLNSCVDPILYF. Over 315 to 362 the chain is Cytoplasmic; it reads LAGDTFRRRLSRATRKSSRRSEPNVQSKSEEMTLNILTEYKQNGDTSL.

Belongs to the G-protein coupled receptor 1 family. As to expression, mainly found in blood, brain, and lung. To a lesser extent in stomach, gut and skeletal muscle.

It localises to the cell membrane. Functionally, receptor for extracellular adenine nucleotides such as ADP. In platelets, binding to ADP leads to mobilization of intracellular calcium ions via activation of phospholipase C, a change in platelet shape, and ultimately platelet aggregation. This chain is P2Y purinoceptor 1 (P2RY1), found in Meleagris gallopavo (Wild turkey).